Here is a 208-residue protein sequence, read N- to C-terminus: Thymidylate kinase (208 aa).

12–19 serves as a coordination point for ATP; it reads GVDGAGKS.

Belongs to the thymidylate kinase family.

The enzyme catalyses dTMP + ATP = dTDP + ADP. Functionally, phosphorylation of dTMP to form dTDP in both de novo and salvage pathways of dTTP synthesis. In Bordetella bronchiseptica (strain ATCC BAA-588 / NCTC 13252 / RB50) (Alcaligenes bronchisepticus), this protein is Thymidylate kinase.